The primary structure comprises 320 residues: Cytochrome f (320 aa).

Positions 1–35 (MQTRNTFSWIREEITRSISVSLIIYIITRASISSA) are cleaved as a signal peptide. Residues tyrosine 36, cysteine 56, cysteine 59, and histidine 60 each coordinate heme. Residues 286-306 (VQGLLFFLASVVLAQIFLVLK) traverse the membrane as a helical segment.

It belongs to the cytochrome f family. In terms of assembly, the 4 large subunits of the cytochrome b6-f complex are cytochrome b6, subunit IV (17 kDa polypeptide, petD), cytochrome f and the Rieske protein, while the 4 small subunits are PetG, PetL, PetM and PetN. The complex functions as a dimer. Heme serves as cofactor.

Its subcellular location is the plastid. The protein localises to the chloroplast thylakoid membrane. Its function is as follows. Component of the cytochrome b6-f complex, which mediates electron transfer between photosystem II (PSII) and photosystem I (PSI), cyclic electron flow around PSI, and state transitions. In Draba nemorosa (Woodland whitlowgrass), this protein is Cytochrome f.